Reading from the N-terminus, the 160-residue chain is Endoribonuclease YbeY (160 aa).

Zn(2+) is bound by residues His118, His122, and His128.

It belongs to the endoribonuclease YbeY family. Zn(2+) serves as cofactor.

Its subcellular location is the cytoplasm. In terms of biological role, single strand-specific metallo-endoribonuclease involved in late-stage 70S ribosome quality control and in maturation of the 3' terminus of the 16S rRNA. This is Endoribonuclease YbeY from Treponema pallidum (strain Nichols).